Consider the following 312-residue polypeptide: uncharacterized protein (312 aa).

The Extracellular portion of the chain corresponds to 1-14 (MSIVETCISFVSTN). Residues 15-35 (PFYPFCTGLLLNCVVTPLYFW) form a helical membrane-spanning segment. Residues 36–41 (KTQNGR) lie on the Cytoplasmic side of the membrane. A helical transmembrane segment spans residues 42–62 (IVVVSLLQFVVLYATAFISIG). Topologically, residues 63–179 (TDKSLYRNKW…LEYDQDTATE (117 aa)) are extracellular. Residues 70–173 (NKWVALPLSK…KGPLGELEYD (104 aa)) form the FAD-binding FR-type domain. A helical transmembrane segment spans residues 180–200 (LGIIAGGSGITPVLQVLQEII). Residues 201-312 (PSPEDLTHIS…GNGTDKVFVF (112 aa)) lie on the Cytoplasmic side of the membrane.

It belongs to the flavoprotein pyridine nucleotide cytochrome reductase family. FAD serves as cofactor.

The protein resides in the membrane. This is an uncharacterized protein from Saccharomyces cerevisiae (strain ATCC 204508 / S288c) (Baker's yeast).